We begin with the raw amino-acid sequence, 90 residues long: MARVTVQDTVEKIGNRFDLVLVSSRRARQLQTGGKDALVPEENDKPTVIALREIEEGLITKDLLDARERQEQQEQDAAELAAVSSITHNR.

The disordered stretch occupies residues 69–90 (RQEQQEQDAAELAAVSSITHNR).

It belongs to the RNA polymerase subunit omega family. In terms of assembly, the RNAP catalytic core consists of 2 alpha, 1 beta, 1 beta' and 1 omega subunit. When a sigma factor is associated with the core the holoenzyme is formed, which can initiate transcription.

It carries out the reaction RNA(n) + a ribonucleoside 5'-triphosphate = RNA(n+1) + diphosphate. Promotes RNA polymerase assembly. Latches the N- and C-terminal regions of the beta' subunit thereby facilitating its interaction with the beta and alpha subunits. The sequence is that of DNA-directed RNA polymerase subunit omega from Aliivibrio salmonicida (strain LFI1238) (Vibrio salmonicida (strain LFI1238)).